Reading from the N-terminus, the 211-residue chain is Dibenzothiophene metabolism operon protein DoxH (211 aa).

Its pathway is aromatic compound metabolism; naphthalene degradation. In terms of biological role, may be involved in the conversion of 2-hydroxy-4-(2'-oxo-3,5-cyclohexadienyl)-buta-2,4-dienoate to cis-O-hydroxybenzylidenepyruvate. DoxH and doxJ encode different enzymes that may have interchangeable functions. This Pseudomonas sp. (strain C18) protein is Dibenzothiophene metabolism operon protein DoxH (doxH).